The sequence spans 122 residues: Large ribosomal subunit protein uL14 (122 aa).

Belongs to the universal ribosomal protein uL14 family. As to quaternary structure, part of the 50S ribosomal subunit. Forms a cluster with proteins L3 and L19. In the 70S ribosome, L14 and L19 interact and together make contacts with the 16S rRNA in bridges B5 and B8.

Functionally, binds to 23S rRNA. Forms part of two intersubunit bridges in the 70S ribosome. The sequence is that of Large ribosomal subunit protein uL14 from Latilactobacillus sakei subsp. sakei (strain 23K) (Lactobacillus sakei subsp. sakei).